Consider the following 551-residue polypeptide: Cytochrome P450 monooxygenase sdnQ (551 aa).

The tract at residues 1 to 23 (MDDPSIASGFQQGTGRTTGANGT) is disordered. A compositionally biased stretch (polar residues) spans 8–23 (SGFQQGTGRTTGANGT). N-linked (GlcNAc...) asparagine glycosylation occurs at Asn21. Residues 41–57 (CIGTSLLVALLTTIIIY) traverse the membrane as a helical segment. Cys491 is a binding site for heme.

The protein belongs to the cytochrome P450 family. Heme serves as cofactor.

It is found in the membrane. It functions in the pathway antibiotic biosynthesis. Its function is as follows. Cytochrome P450 monooxygenase; part of the gene cluster that mediates the biosynthesis of sordarin and hypoxysordarin, glycoside antibiotics with a unique tetracyclic diterpene aglycone structure. First, the geranylgeranyl diphosphate synthase sdnC constructs GGDP from farnesyl diphosphate and isopentenyl diphosphate. The diterpene cyclase sdnA then catalyzes the cyclization of GGDP to afford cycloaraneosene. Cycloaraneosene is then hydroxylated four times by the putative cytochrome P450 monooxygenases sdnB, sdnE, sdnF and sdnH to give a hydroxylated cycloaraneosene derivative such as cycloaraneosene-8,9,13,19-tetraol. Although the order of the hydroxylations is unclear, at least C8, C9 and C13 of the cycloaraneosene skeleton are hydroxylated before the sordaricin formation. Dehydration of the 13-hydroxy group of the hydroxylated cycloaraneosene derivative might be catalyzed by an unassigned hypothetical protein such as sdnG and sdnP to construct the cyclopentadiene moiety. The FAD-dependent oxidoreductase sdnN is proposed to catalyze the oxidation at C9 of the hydroxylated cycloaraneosene derivative and also catalyze the Baeyer-Villiger oxidation to give the lactone intermediate. The presumed lactone intermediate would be hydrolyzed to give an acrolein moiety and a carboxylate moiety. Then, [4+2]cycloaddition would occur between the acrolein moiety and the cyclopentadiene moiety to give sordaricin. SdnN might also be involved in the [4+2]cycloaddition after the hypothesized oxidation to accommodate the oxidized product and prompt the [4+2]cycloaddition. GDP-6-deoxy-D-altrose may be biosynthesized from GDP-D-mannose by the putative GDP-mannose-4,6-dehydratase sdnI and the short-chain dehydrogenase sdnK. The glycosyltransferase sdnJ catalyzes the attachment of 6-deoxy-D-altrose onto the 19-hydroxy group of sordaricin to give 4'-O-demethylsordarin. The methyltransferase sdnD would complete the biosynthesis of sordarin. Sordarin can be further modified into hypoxysordarin. The unique acyl chain at the 3'-hydroxy group of hypoxysordarin would be constructed by an iterative type I PKS sdnO and the trans-acting polyketide methyltransferase sdnL. SdnL would be responsible for the introduction of an alpha-methyl group of the polyketide chain. Alternatively, the beta-lactamase-like protein sdnR might be responsible for the cleavage and transfer of the polyketide chain from the PKS sdnO to sordarin. Two putative cytochrome P450 monooxygenases, sdnQ and sdnT, might catalyze the epoxidations of the polyketide chain to complete the biosynthesis of hypoxysordarin. Transcriptional regulators sdnM and sdnS are presumably encoded for the transcriptional regulation of the expression of the sdn gene cluster. This is Cytochrome P450 monooxygenase sdnQ from Sordaria araneosa (Pleurage araneosa).